A 666-amino-acid chain; its full sequence is Non-receptor tyrosine-protein kinase TNK1 (666 aa).

Residues Ser-60 and Ser-96 each carry the phosphoserine modification. One can recognise a Protein kinase domain in the interval 116–377 (VCRGELLGSG…PSFSHLEGLL (262 aa)). ATP is bound by residues 122 to 130 (LGSGCFGVV) and Lys-148. Asp-245 serves as the catalytic Proton acceptor. Phosphoserine is present on residues Ser-255 and Ser-411. In terms of domain architecture, SH3 spans 380–445 (AGPSEACCVR…PASAVTLADA (66 aa)). Residues 446-493 (GGLPATRPVHRGTPARGDQHPGSIDGDRKKANLWDAPPARGQRRNMPL) form a disordered region. Ser-502 is modified (phosphoserine). Residues 506-579 (VLSLGPRPTG…MGMPGARKAA (74 aa)) form a disordered region. Thr-514 is subject to Phosphothreonine. Ser-519 is modified (phosphoserine). Residues 531-541 (QGPPGLPPRPP) show a composition bias toward pro residues. Positions 542-552 (LSSSSPQPSQP) are enriched in low complexity. Phosphoserine is present on Ser-582.

Belongs to the protein kinase superfamily. Tyr protein kinase family. In terms of assembly, interacts with the SH3 domain of PLCG1 via its Pro-rich domain. In terms of processing, autophosphorylated on tyrosine residues. Expressed in all umbilical cord blood, bone marrow and adult blood cell sub-populations and in several leukemia cell lines. Highly expressed in fetal blood, brain, lung, liver and kidney. Detected at lower levels in adult prostate, testis, ovary, small intestine and colon. Not expressed in adult lung, liver, kidney or brain.

It localises to the cytoplasm. Its subcellular location is the membrane. It carries out the reaction L-tyrosyl-[protein] + ATP = O-phospho-L-tyrosyl-[protein] + ADP + H(+). In terms of biological role, involved in negative regulation of cell growth. Has tumor suppressor properties. Plays a negative regulatory role in the Ras-MAPK pathway. May function in signaling pathways utilized broadly during fetal development and more selectively in adult tissues and in cells of the lymphohematopoietic system. Could specifically be involved in phospholipid signal transduction. The polypeptide is Non-receptor tyrosine-protein kinase TNK1 (Homo sapiens (Human)).